The following is a 382-amino-acid chain: 1-deoxy-D-xylulose 5-phosphate reductoisomerase (382 aa).

NADPH is bound by residues Thr-10, Gly-11, Ser-12, Ile-13, Gly-36, and Asn-122. Lys-123 serves as a coordination point for 1-deoxy-D-xylulose 5-phosphate. Glu-124 contributes to the NADPH binding site. Asp-148 is a binding site for Mn(2+). Residues Ser-149, Glu-150, Ser-174, and His-197 each coordinate 1-deoxy-D-xylulose 5-phosphate. Residue Glu-150 coordinates Mn(2+). An NADPH-binding site is contributed by Gly-203. 1-deoxy-D-xylulose 5-phosphate is bound by residues Ser-210, Asn-215, Lys-216, and Glu-219. Glu-219 is a Mn(2+) binding site.

It belongs to the DXR family. The cofactor is Mg(2+). Mn(2+) is required as a cofactor.

The enzyme catalyses 2-C-methyl-D-erythritol 4-phosphate + NADP(+) = 1-deoxy-D-xylulose 5-phosphate + NADPH + H(+). The protein operates within isoprenoid biosynthesis; isopentenyl diphosphate biosynthesis via DXP pathway; isopentenyl diphosphate from 1-deoxy-D-xylulose 5-phosphate: step 1/6. Catalyzes the NADPH-dependent rearrangement and reduction of 1-deoxy-D-xylulose-5-phosphate (DXP) to 2-C-methyl-D-erythritol 4-phosphate (MEP). This Pelodictyon phaeoclathratiforme (strain DSM 5477 / BU-1) protein is 1-deoxy-D-xylulose 5-phosphate reductoisomerase.